The following is a 392-amino-acid chain: S-adenosylmethionine synthase (392 aa).

His-17 contributes to the ATP binding site. Asp-19 contributes to the Mg(2+) binding site. K(+) is bound at residue Glu-45. Positions 58 and 102 each coordinate L-methionine. Residues 102–112 form a flexible loop region; it reads QSADIAQGVDA. Residues 169–171, 235–236, Asp-244, 250–251, Ala-267, and Lys-271 contribute to the ATP site; these read DAK, KF, and RK. Asp-244 provides a ligand contact to L-methionine. Position 275 (Lys-275) interacts with L-methionine.

This sequence belongs to the AdoMet synthase family. As to quaternary structure, homotetramer; dimer of dimers. Requires Mg(2+) as cofactor. The cofactor is K(+).

Its subcellular location is the cytoplasm. It catalyses the reaction L-methionine + ATP + H2O = S-adenosyl-L-methionine + phosphate + diphosphate. The protein operates within amino-acid biosynthesis; S-adenosyl-L-methionine biosynthesis; S-adenosyl-L-methionine from L-methionine: step 1/1. In terms of biological role, catalyzes the formation of S-adenosylmethionine (AdoMet) from methionine and ATP. The overall synthetic reaction is composed of two sequential steps, AdoMet formation and the subsequent tripolyphosphate hydrolysis which occurs prior to release of AdoMet from the enzyme. The protein is S-adenosylmethionine synthase of Methylobacterium sp. (strain 4-46).